A 140-amino-acid chain; its full sequence is Large ribosomal subunit protein bL34m (140 aa).

The protein belongs to the bacterial ribosomal protein bL34 family. Component of the mitochondrial large ribosomal subunit (mt-LSU). Mature N.crassa 74S mitochondrial ribosomes consist of a small (37S) and a large (54S) subunit. The 37S small subunit contains a 16S ribosomal RNA (16S mt-rRNA) and 32 different proteins. The 54S large subunit contains a 23S rRNA (23S mt-rRNA) and 42 different proteins.

Its subcellular location is the mitochondrion. In terms of biological role, component of the mitochondrial ribosome (mitoribosome), a dedicated translation machinery responsible for the synthesis of mitochondrial genome-encoded proteins, including at least some of the essential transmembrane subunits of the mitochondrial respiratory chain. The mitoribosomes are attached to the mitochondrial inner membrane and translation products are cotranslationally integrated into the membrane. This Neurospora crassa (strain ATCC 24698 / 74-OR23-1A / CBS 708.71 / DSM 1257 / FGSC 987) protein is Large ribosomal subunit protein bL34m (mrpl34).